A 371-amino-acid polypeptide reads, in one-letter code: 4-hydroxy-3-methylbut-2-en-1-yl diphosphate synthase (flavodoxin) (371 aa).

Positions 269, 272, 304, and 311 each coordinate [4Fe-4S] cluster.

It belongs to the IspG family. It depends on [4Fe-4S] cluster as a cofactor.

The enzyme catalyses (2E)-4-hydroxy-3-methylbut-2-enyl diphosphate + oxidized [flavodoxin] + H2O + 2 H(+) = 2-C-methyl-D-erythritol 2,4-cyclic diphosphate + reduced [flavodoxin]. It participates in isoprenoid biosynthesis; isopentenyl diphosphate biosynthesis via DXP pathway; isopentenyl diphosphate from 1-deoxy-D-xylulose 5-phosphate: step 5/6. In terms of biological role, converts 2C-methyl-D-erythritol 2,4-cyclodiphosphate (ME-2,4cPP) into 1-hydroxy-2-methyl-2-(E)-butenyl 4-diphosphate. The chain is 4-hydroxy-3-methylbut-2-en-1-yl diphosphate synthase (flavodoxin) from Acinetobacter baylyi (strain ATCC 33305 / BD413 / ADP1).